A 252-amino-acid chain; its full sequence is Triosephosphate isomerase (252 aa).

Residue 10–12 (NWK) participates in substrate binding. His-96 acts as the Electrophile in catalysis. Residue Glu-168 is the Proton acceptor of the active site. Substrate is bound by residues Gly-174, Ser-214, and 235–236 (GG).

Belongs to the triosephosphate isomerase family. Homodimer.

The protein resides in the cytoplasm. The enzyme catalyses D-glyceraldehyde 3-phosphate = dihydroxyacetone phosphate. It functions in the pathway carbohydrate biosynthesis; gluconeogenesis. Its pathway is carbohydrate degradation; glycolysis; D-glyceraldehyde 3-phosphate from glycerone phosphate: step 1/1. Involved in the gluconeogenesis. Catalyzes stereospecifically the conversion of dihydroxyacetone phosphate (DHAP) to D-glyceraldehyde-3-phosphate (G3P). In Streptococcus agalactiae serotype Ia (strain ATCC 27591 / A909 / CDC SS700), this protein is Triosephosphate isomerase.